Reading from the N-terminus, the 299-residue chain is Epimerase family protein SERP0438 (299 aa).

The protein belongs to the NAD(P)-dependent epimerase/dehydratase family. SDR39U1 subfamily.

In Staphylococcus epidermidis (strain ATCC 35984 / DSM 28319 / BCRC 17069 / CCUG 31568 / BM 3577 / RP62A), this protein is Epimerase family protein SERP0438.